The sequence spans 163 residues: MTDTIAPEATPEGAEAGQAGIRILAQFVRDFSFENPLAPDALRAGAAQPAIDMGVEMNARGRADGLFEVDLKLSARAEREGQAVFHVEVVYGGLFHIAGIAEEDLEPVLLIECPRFLFPYARRLISDVTAEGGFPPFLIDPIDFAGVYAARKAQAEGQQVGNA.

The protein belongs to the SecB family. In terms of assembly, homotetramer, a dimer of dimers. One homotetramer interacts with 1 SecA dimer.

It localises to the cytoplasm. Functionally, one of the proteins required for the normal export of preproteins out of the cell cytoplasm. It is a molecular chaperone that binds to a subset of precursor proteins, maintaining them in a translocation-competent state. It also specifically binds to its receptor SecA. This Caulobacter vibrioides (strain ATCC 19089 / CIP 103742 / CB 15) (Caulobacter crescentus) protein is Protein-export protein SecB.